Reading from the N-terminus, the 143-residue chain is uncharacterized protein (143 aa).

Residues 11–139 (EYELTTFIRR…FGELLQRMNK (129 aa)) form the HTH marR-type domain. Positions 53-76 (VKELAESFKLDISTLSRQAAALEA) form a DNA-binding region, H-T-H motif.

This is an uncharacterized protein from Bacillus subtilis (strain 168).